The chain runs to 770 residues: Probable zinc transporter protein DDB_G0291141 (770 aa).

The Cytoplasmic portion of the chain corresponds to 1–36 (MAGSLDDSIYNNGRSGGGGGGFKFSKGFNKDSISKR). The helical transmembrane segment at 37–57 (IIMMLFFSKGIRAWSCIILLY) threads the bilayer. The Extracellular segment spans residues 58–62 (FLQSS). A helical membrane pass occupies residues 63–83 (ISIISASFYMCLFSAIFSVVV). Topologically, residues 84–100 (EKPWNLLSSLRPSQIKK) are cytoplasmic. Residues 101-117 (IIYHSIFNLLIIITWNS) traverse the membrane as a helical segment. The Extracellular portion of the chain corresponds to 118–123 (SIKFIG). Residues 124 to 146 (PIGSILASDYTFSTYPLIFNSLL) traverse the membrane as a helical segment. Residues 147–154 (QGNFLATD) are Cytoplasmic-facing. The chain crosses the membrane as a helical span at residues 155-175 (MSRGSIMLMIGYFLIPLFGIS). The Extracellular portion of the chain corresponds to 176-184 (NRLDILGYT). The chain crosses the membrane as a helical span at residues 185 to 205 (SSQVFMIGLFSLIVHNVLVLW). The Cytoplasmic portion of the chain corresponds to 206-224 (KKTIVRSWNSGSSGGKNKL). Residues 225 to 245 (SSLGSCVSTIILFVFKLFEGF) form a helical membrane-spanning segment. The Extracellular segment spans residues 246–262 (SSGSSGSDSINQVSYSQ). Residues 263–283 (LFVIAIITFILYSLNQFIDDV) form a helical membrane-spanning segment. At 284 to 291 (SEKELTFN) the chain is on the cytoplasmic side. The chain crosses the membrane as a helical span at residues 292–312 (VLSKVSLTSSVIFGLLAALFI). Over 313-316 (GFKD) the chain is Extracellular. Residues 317–337 (FFHPILILSFIFIINAIHILY) traverse the membrane as a helical segment. Residues 338–404 (SKSNDIQPMT…QIVDKPTSRR (67 aa)) lie on the Cytoplasmic side of the membrane. The chain crosses the membrane as a helical span at residues 405–425 (IFTFLVINLMFMFVEMAYGIW). Residues 426 to 434 (TNSLGLITD) lie on the Extracellular side of the membrane. A helical transmembrane segment spans residues 435–455 (ACHMFFDATALFIALVAEVIS). The Cytoplasmic segment spans residues 456-469 (QWKQNDKYSYGYGR). Residues 470–490 (FQVLSGFVNGIFLIFIAVTIL) traverse the membrane as a helical segment. The Extracellular portion of the chain corresponds to 491–507 (MESVERLLEPPEINTDK). A helical transmembrane segment spans residues 508–528 (LLLVSVLGFIINLIGIFSFHG). Residues 529–592 (DHGHSHGGGG…GVFLHLLADT (64 aa)) are Cytoplasmic-facing. Residues 532 to 566 (HSHGGGGGHSHGGGEKKEKHHGHSHGGHGDHQQVT) form a disordered region. Residues 593-613 (LGSVGVIVSSLIIQIWGYTLA) form a helical membrane-spanning segment. Position 614 (Asp614) is a topological domain, extracellular. The chain crosses the membrane as a helical span at residues 615 to 635 (PICSLLISILIFLSVLPLIAN). The Cytoplasmic portion of the chain corresponds to 636-770 (TAKTLLQCTP…SSSSHHHRHN (135 aa)). The segment at 751–770 (DIHHNHSSSSSSSSHHHRHN) is disordered.

This sequence belongs to the cation diffusion facilitator (CDF) transporter (TC 2.A.4) family. SLC30A subfamily.

It localises to the membrane. May be involved in zinc transport from the cytoplasm to either intracellular organelles or extracellular spaces. The protein is Probable zinc transporter protein DDB_G0291141 of Dictyostelium discoideum (Social amoeba).